The chain runs to 817 residues: MMDGPRSDVGRWGGNPLQPPTTPSPEPEPEPDGRSRRGGGRSFWARCCGCCSCRNAADDDWGPEPSDSRGRGSSSGTRRPGSRGSDSRRPVSRGSGVNAAGDGTIREGMLVVNGVDLLSSRSDQNRREHHTDEYEYDELIVRRGQPFHMLLLLSRTYESSDRITLELLIGNNPEVGKGTHVIIPVGKGGSGGWKAQVVKASGQNLNLRVHTSPNAIIGKFQFTVRTQSDAGEFQLPFDPRNEIYILFNPWCPEDIVYVDHEDWRQEYVLNESGRIYYGTEAQIGERTWNYGQFDHGVLDACLYILDRRGMPYGGRGDPVNVSRVISAMVNSLDDNGVLIGNWSGDYSRGTNPSAWVGSVEILLSYLRTGYSVPYGQCWVFAGVTTTVLRCLGLATRTVTNFNSAHDTDTSLTMDIYFDENMKPLEHLNHDSVWNFHVWNDCWMKRPDLPSGFDGWQVVDATPQETSSGIFCCGPCSVESIKNGLVYMKYDTPFIFAEVNSDKVYWQRQDDGSFKIVYVEEKAIGTLIVTKAISSNMREDITYLYKHPEGSDAERKAVETAAAHGSKPNVYANRGSAEDVAMQVEAQDAVMGQDLMVSVMLINHSSSRRTVKLHLYLSVTFYTGVSGTIFKETKKEVELAPGASDRVTMPVAYKEYRPHLVDQGAMLLNVSGHVKESGQVLAKQHTFRLRTPDLSLTLLGAAVVGQECEVQIVFKNPLPVTLTNVVFRLEGSGLQRPKILNVGDIGGNETVTLRQSFVPVRPGPRQLIASLDSPQLSQVHGVIQVDVAPAPGDGGFFSDAGGDSHLGETIPMASRGGA.

Disordered regions lie at residues 1-38 (MMDG…SRRG) and 59-105 (DDWG…DGTI). Residues 1–100 (MMDGPRSDVG…VSRGSGVNAA (100 aa)) are membrane anchorage region. Residues 17 to 26 (LQPPTTPSPE) show a composition bias toward pro residues. Threonine 22 bears the Phosphothreonine mark. A phosphoserine mark is found at serine 24, serine 68, serine 82, serine 85, serine 92, and serine 95. Residues 71–84 (RGSSSGTRRPGSRG) are compositionally biased toward low complexity. Active-site residues include cysteine 377, histidine 436, and aspartate 459. 4 residues coordinate Ca(2+): asparagine 499, aspartate 501, glutamate 548, and glutamate 553. Residues 793–817 (GGFFSDAGGDSHLGETIPMASRGGA) are disordered.

The protein belongs to the transglutaminase superfamily. Transglutaminase family. As to quaternary structure, interacts with PLAAT4. Ca(2+) is required as a cofactor. Palmitoylated. Post-translationally, the membrane anchorage region possesses a cluster of five cysteines within which fatty acid(s) may become thioester-linked. It is subject to phorbol ester-stimulated phosphorylation and is hypersensitive to proteolysis, which releases the enzyme in a soluble form. In terms of processing, tyrosine-phosphorylated.

It localises to the membrane. The catalysed reaction is L-glutaminyl-[protein] + L-lysyl-[protein] = [protein]-L-lysyl-N(6)-5-L-glutamyl-[protein] + NH4(+). Catalyzes the cross-linking of proteins and the conjugation of polyamines to proteins. Responsible for cross-linking epidermal proteins during formation of the stratum corneum. Involved in cell proliferation. The chain is Protein-glutamine gamma-glutamyltransferase K (TGM1) from Homo sapiens (Human).